We begin with the raw amino-acid sequence, 397 residues long: 2-isopropylmalate synthase 1 (397 aa).

The Pyruvate carboxyltransferase domain occupies 6–268 (VIVFDTTLRD…VHGINTKEIY (263 aa)). Residues Asp-15, His-203, His-205, and Asn-239 each contribute to the Mn(2+) site.

This sequence belongs to the alpha-IPM synthase/homocitrate synthase family. LeuA type 1 subfamily. Homodimer. Requires Mn(2+) as cofactor.

Its subcellular location is the cytoplasm. It carries out the reaction 3-methyl-2-oxobutanoate + acetyl-CoA + H2O = (2S)-2-isopropylmalate + CoA + H(+). The protein operates within amino-acid biosynthesis; L-leucine biosynthesis; L-leucine from 3-methyl-2-oxobutanoate: step 1/4. Its function is as follows. Catalyzes the condensation of the acetyl group of acetyl-CoA with 3-methyl-2-oxobutanoate (2-ketoisovalerate) to form 3-carboxy-3-hydroxy-4-methylpentanoate (2-isopropylmalate). This Caldanaerobacter subterraneus subsp. tengcongensis (strain DSM 15242 / JCM 11007 / NBRC 100824 / MB4) (Thermoanaerobacter tengcongensis) protein is 2-isopropylmalate synthase 1.